Here is a 299-residue protein sequence, read N- to C-terminus: MANFPDSLLILNGKSADNQPLREAITLLRDEGIQIHVRVTWEKGDAQRYVDEARRLGVETVIAGGGDGTINEVSTALIQIRDGVVPALGLLPLGTANDFATSAGIPEALDKALKLAIAGNAMEIDMARVNDKTSFINMATGGFGTRITTETPEKLKAALGGVSYLIHGLMRMDTLKPDRCEIRGENFHWQGNALVIGIGNGRQAGGGQQLCPTALINDGLLQLRIFTGEELLPALFSTLTQSDDNQNIIDGASAWFDIHAPHEITFNLDGEPLSGQEFHIEVLPGALRCRLPPDCPLLR.

The DAGKc domain occupies 2–133 (ANFPDSLLIL…IDMARVNDKT (132 aa)). ATP-binding positions include T40, 66 to 72 (GDGTINE), and T95. The Mg(2+) site is built by L215, D218, and L220. Catalysis depends on E271, which acts as the Proton acceptor.

The protein belongs to the diacylglycerol/lipid kinase family. YegS lipid kinase subfamily. Requires Mg(2+) as cofactor. Ca(2+) is required as a cofactor.

The protein resides in the cytoplasm. Functionally, probably phosphorylates lipids; the in vivo substrate is unknown. This chain is Probable lipid kinase YegS, found in Salmonella arizonae (strain ATCC BAA-731 / CDC346-86 / RSK2980).